The sequence spans 94 residues: Cytochrome b-c1 complex subunit 8, mitochondrial (94 aa).

Residues 2 to 49 lie on the Mitochondrial matrix side of the membrane; it reads GPPSGKTYMGWWGHMGGPKQKGITSYAVSPYAQKPLQGIFHNAVFNSF. A helical membrane pass occupies residues 50–80; the sequence is RRFKSQFLYVLIPAGIYWYWWKNGNEYNEFL. Topologically, residues 81 to 94 are mitochondrial intermembrane; sequence YSKAGREELERVNV.

The protein belongs to the UQCRQ/QCR8 family. Component of the ubiquinol-cytochrome c oxidoreductase (cytochrome b-c1 complex, complex III, CIII), a multisubunit enzyme composed of 10 subunits. The complex is composed of 3 respiratory subunits cytochrome b (COB), cytochrome c1 (CYT1) and Rieske protein (RIP1), 2 core protein subunits COR1 and QCR2, and 5 low-molecular weight protein subunits QCR6, QCR7, QCR8, QCR9 and QCR10. The complex exists as an obligatory dimer and forms supercomplexes (SCs) in the inner mitochondrial membrane with a monomer or a dimer of cytochrome c oxidase (complex IV, CIV), resulting in 2 different assemblies (supercomplexes III(2)IV and III(2)IV(2)).

It localises to the mitochondrion inner membrane. Functionally, component of the ubiquinol-cytochrome c oxidoreductase, a multisubunit transmembrane complex that is part of the mitochondrial electron transport chain which drives oxidative phosphorylation. The respiratory chain contains 3 multisubunit complexes succinate dehydrogenase (complex II, CII), ubiquinol-cytochrome c oxidoreductase (cytochrome b-c1 complex, complex III, CIII) and cytochrome c oxidase (complex IV, CIV), that cooperate to transfer electrons derived from NADH and succinate to molecular oxygen, creating an electrochemical gradient over the inner membrane that drives transmembrane transport and the ATP synthase. The cytochrome b-c1 complex catalyzes electron transfer from ubiquinol to cytochrome c, linking this redox reaction to translocation of protons across the mitochondrial inner membrane, with protons being carried across the membrane as hydrogens on the quinol. In the process called Q cycle, 2 protons are consumed from the matrix, 4 protons are released into the intermembrane space and 2 electrons are passed to cytochrome c. This is Cytochrome b-c1 complex subunit 8, mitochondrial (QCR8) from Saccharomyces cerevisiae (strain ATCC 204508 / S288c) (Baker's yeast).